The following is a 32-amino-acid chain: Dermatoxin-J1 (32 aa).

Gln32 is modified (glutamine amide).

As to expression, expressed by the skin glands.

It localises to the secreted. Antimicrobial peptide. The chain is Dermatoxin-J1 from Phasmahyla jandaia (Jandaia leaf frog).